The following is a 476-amino-acid chain: Sulfite exporter TauE/SafE family protein 3 (476 aa).

12 helical membrane-spanning segments follow: residues 8 to 28 (WLGL…FAFV), 76 to 92 (FNWQ…FGAA), 99 to 115 (VGGG…IIGF), 120 to 142 (ATAI…NLRL), 151 to 171 (IIDY…ISIG), 172 to 192 (VAFN…VLFL), 257 to 277 (VYWK…ALQI), 291 to 311 (VINL…AVAL), 339 to 359 (FGII…FIMG), 360 to 380 (PLFL…TFAM), 397 to 417 (FPVP…WVGQ), and 433 to 453 (IIFI…GVGI).

This sequence belongs to the 4-toluene sulfonate uptake permease (TSUP) (TC 2.A.102) family.

Its subcellular location is the membrane. This is Sulfite exporter TauE/SafE family protein 3 from Arabidopsis thaliana (Mouse-ear cress).